The chain runs to 1548 residues: MLRARPEALMLLGALLTGSLGPSGNQDALSLPWEVQRYDGWFNNLRHHERGAVGCRLQRRVPANYADGVYQALEEPQLPNPRRLSNAATRGIAGLPSLHNRTVLGVFFGYHVLSDVVSVETPGCPAEFLNIRIPPGDPVFDPDQRGDVVLPFQRSRWDPETGRSPSNPRDLANQVTGWLDGSAIYGSSHSWSDALRSFSGGQLASGPDPAFPRDSQNPLLMWAAPDPATGQNGPRGLYAFGAERGNREPFLQALGLLWFRYHNLWAQRLARQHPDWEDEELFQHARKRVIATYQNIAVYEWLPSFLQKTLPEYTGYRPFLDPSISPEFVVASEQFFSTMVPPGVYMRNASCHFRKVLNKGFQSSQALRVCNNYWIRENPNLNSTQEVNELLLGMASQISELEDNIVVEDLRDYWPGPGKFSRTDYVASSIQRGRDMGLPSYSQALLAFGLDIPRNWSDLNPNVDPQVLEATAALYNQDLSQLELLLGGLLESHGDPGPLFSAIVLDQFVRLRDGDRYWFENTRNGLFSKKEIEDIRNTTLRDVLVAVINIDPSALQPNVFVWHKGAPCPQPKQLTTDGLPQCAPLTVLDFFEGSSPGFAITIIALCCLPLVSLLLSGVVAYFRGREHKKLQKKLKESVKKEAAKDGVPAMEWPGPKERSSPIIIQLLSDRCLQVLNRHLTVLRVVQLQPLQQVNLILSNNRGCRTLLLKIPKEYDLVLLFSSEEERGAFVQQLWDFCVRWALGLHVAEMSEKELFRKAVTKQQRERILEIFFRHLFAQVLDINQADAGTLPLDSSQKVREALTCELSRAEFAESLGLKPQDMFVESMFSLADKDGNGYLSFREFLDILVVFMKGSPEDKSRLMFTMYDLDENGFLSKDEFFTMMRSFIEISNNCLSKAQLAEVVESMFRESGFQDKEELTWEDFHFMLRDHDSELRFTQLCVKGGGGGGNGIRDIFKQNISCRVSFITRTPGERSHPQGLGPPAPEAPELGGPGLKKRFGKKAAVPTPRLYTEALQEKMQRGFLAQKLQQYKRFVENYRRHIVCVAIFSAICVGVFADRAYYYGFASPPSDIAQTTLVGIILSRGTAASVSFMFSYILLTMCRNLITFLRETFLNRYVPFDAAVDFHRWIAMAAVVLAILHSAGHAVNVYIFSVSPLSLLACIFPNVFVNDGSKLPQKFYWWFFQTVPGMTGVLLLLVLAIMYVFASHHFRRRSFRGFWLTHHLYILLYALLIIHGSYALIQLPTFHIYFLVPAIIYGGDKLVSLSRKKVEISVVKAELLPSGVTYLQFQRPQGFEYKSGQWVRIACLALGTTEYHPFTLTSAPHEDTLSLHIRAVGPWTTRLREIYSSPKGNGCAGYPKLYLDGPFGEGHQEWHKFEVSVLVGGGIGVTPFASILKDLVFKSSLGSQMLCKKIYFIWVTRTQRQFEWLADIIQEVEENDHQDLVSVHIYVTQLAEKFDLRTTMLYICERHFQKVLNRSLFTGLRSITHFGRPPFEPFFNSLQEVHPQVRKIGVFSCGPPGMTKNVEKACQLVNRQDRAHFMHHYENF.

An N-terminal signal peptide occupies residues 1 to 25 (MLRARPEALMLLGALLTGSLGPSGN). At 26–601 (QDALSLPWEV…EGSSPGFAIT (576 aa)) the chain is on the extracellular side. Residues 30–596 (SLPWEVQRYD…VLDFFEGSSP (567 aa)) form a peroxidase-like; mediates peroxidase activity region. 5 N-linked (GlcNAc...) asparagine glycosylation sites follow: Asn-100, Asn-348, Asn-382, Asn-455, and Asn-537. The cysteines at positions 124 and 1162 are disulfide-linked. A helical membrane pass occupies residues 602–622 (IIALCCLPLVSLLLSGVVAYF). Residues 623 to 1041 (RGREHKKLQK…KRFVENYRRH (419 aa)) are Cytoplasmic-facing. EF-hand domains lie at 819–854 (PQDM…FMKG), 855–890 (SPED…FIEI), and 899–934 (QLAE…HDSE). Residues Asp-832, Asp-834, Asn-836, Tyr-838, Glu-843, Asp-868, Asp-870, Asn-872, and Glu-879 each contribute to the Ca(2+) site. Positions 960-1245 (ISCRVSFITR…GSYALIQLPT (286 aa)) are interaction with TXNDC11. The tract at residues 971–991 (PGERSHPQGLGPPAPEAPELG) is disordered. The chain crosses the membrane as a helical span at residues 1042–1062 (IVCVAIFSAICVGVFADRAYY). Residues 1063 to 1076 (YGFASPPSDIAQTT) are Extracellular-facing. Residues 1077-1097 (LVGIILSRGTAASVSFMFSYI) traverse the membrane as a helical segment. Residues 1084–1266 (RGTAASVSFM…YGGDKLVSLS (183 aa)) enclose the Ferric oxidoreductase domain. Residues 1098 to 1128 (LLTMCRNLITFLRETFLNRYVPFDAAVDFHR) lie on the Cytoplasmic side of the membrane. A helical transmembrane segment spans residues 1129-1151 (WIAMAAVVLAILHSAGHAVNVYI). Residues 1152–1185 (FSVSPLSLLACIFPNVFVNDGSKLPQKFYWWFFQ) are Extracellular-facing. Residues 1186–1206 (TVPGMTGVLLLLVLAIMYVFA) traverse the membrane as a helical segment. Topologically, residues 1207 to 1223 (SHHFRRRSFRGFWLTHH) are cytoplasmic. The next 2 membrane-spanning stretches (helical) occupy residues 1224–1244 (LYIL…IQLP) and 1245–1265 (TFHI…LVSL). Over 1266–1548 (SRKKVEISVV…AHFMHHYENF (283 aa)) the chain is Cytoplasmic. The region spanning 1267–1373 (RKKVEISVVK…DGPFGEGHQE (107 aa)) is the FAD-binding FR-type domain.

The protein in the N-terminal section; belongs to the peroxidase family. As to quaternary structure, heterodimer with DUOXA2; disulfide-linked. Interacts with TXNDC11, TPO and CYBA. Post-translationally, N-glycosylated. Expressed in colon, small intestine, duodenum and tracheal surface epithelial cells (at protein level). Expressed in thyrocytes. Also detected in kidney, liver, lung, pancreas, prostate, salivary glands, rectum and testis.

Its subcellular location is the apical cell membrane. The protein resides in the cell junction. The catalysed reaction is NADH + O2 + H(+) = H2O2 + NAD(+). The enzyme catalyses NADPH + O2 + H(+) = H2O2 + NADP(+). It functions in the pathway hormone biosynthesis; thyroid hormone biosynthesis. With respect to regulation, peroxidase activity is inhibited by aminobenzohydrazide. The NADPH oxidase activity is calcium-dependent. Generates hydrogen peroxide which is required for the activity of thyroid peroxidase/TPO and lactoperoxidase/LPO. Plays a role in thyroid hormones synthesis and lactoperoxidase-mediated antimicrobial defense at the surface of mucosa. May have its own peroxidase activity through its N-terminal peroxidase-like domain. The polypeptide is Dual oxidase 2 (DUOX2) (Homo sapiens (Human)).